Consider the following 737-residue polypeptide: Polyribonucleotide nucleotidyltransferase (737 aa).

Residues D489 and D495 each coordinate Mg(2+). The KH domain maps to P556–I615. Positions D625 to K693 constitute an S1 motif domain. Positions S691–E737 are disordered. Residues P700 to P714 show a composition bias toward basic and acidic residues. The span at H715–K724 shows a compositional bias: basic residues. Over residues P725–E737 the composition is skewed to basic and acidic residues.

It belongs to the polyribonucleotide nucleotidyltransferase family. Mg(2+) is required as a cofactor.

The protein resides in the cytoplasm. The catalysed reaction is RNA(n+1) + phosphate = RNA(n) + a ribonucleoside 5'-diphosphate. Functionally, involved in mRNA degradation. Catalyzes the phosphorolysis of single-stranded polyribonucleotides processively in the 3'- to 5'-direction. The sequence is that of Polyribonucleotide nucleotidyltransferase from Streptococcus pneumoniae (strain 70585).